The sequence spans 673 residues: Zinc finger and BTB domain-containing protein 16 (673 aa).

The region spanning 34–96 (CDVVIMVDSQ…AYTATLQAKA (63 aa)) is the BTB domain. 3 positions are modified to phosphoserine; by PDPK1: Ser-76, Ser-184, and Ser-197. The interaction with RUNX1T1 stretch occupies residues 200 to 300 (KAAVDSLMTI…SARELHYGRE (101 aa)). Disordered regions lie at residues 215-236 (QGTL…GRHP) and 249-332 (DEVP…KHLG). Ser-256 carries the post-translational modification Phosphoserine; by PDPK1. The residue at position 282 (Thr-282) is a Phosphothreonine; by PDPK1. Composition is skewed to basic and acidic residues over residues 293–302 (RELHYGREES) and 319–331 (RPEH…EKHL). 8 consecutive C2H2-type zinc fingers follow at residues 404-426 (EQCS…RKLH), 432-454 (YGCE…LLAH), 461-483 (FVCD…RQTH), 490-512 (VFCL…MEVH), 518-540 (YICS…LRSH), 546-568 (YECE…KRIH), 574-596 (YECN…YRVH), and 602-624 (FECK…LRTH). The residue at position 628 (Ser-628) is a Phosphoserine; by PDPK1. The C2H2-type 9 zinc finger occupies 630–652 (YQCTICTEYCPSLSSMQKHMKGH).

The protein belongs to the krueppel C2H2-type zinc-finger protein family. As to quaternary structure, binds EPN1. Interacts with ZBTB32 and CUL3. Interacts with ATP7B. Interacts with transcriptional corepressor RUNX1T1 (via its N-terminus); the interaction increases the transcription repression activity of ZBTB16. Interacts (via C2H2-type zinc finger domains 1 and 2) with RNF112. In terms of tissue distribution, within the hematopoietic system, PLZF is expressed in bone marrow, early myeloid cell lines and peripheral blood mononuclear cells. Also expressed in the ovary, and at lower levels, in the kidney and lung.

The protein resides in the nucleus. It localises to the nuclear body. It participates in protein modification; protein ubiquitination. In terms of biological role, acts as a transcriptional repressor. Transcriptional repression may be mediated through recruitment of histone deacetylases to target promoters. May play a role in myeloid maturation and in the development and/or maintenance of other differentiated tissues. Probable substrate-recognition component of an E3 ubiquitin-protein ligase complex which mediates the ubiquitination and subsequent proteasomal degradation of target proteins. The polypeptide is Zinc finger and BTB domain-containing protein 16 (ZBTB16) (Homo sapiens (Human)).